A 421-amino-acid chain; its full sequence is Putative zinc finger protein R05D3.3 (421 aa).

C2H2-type zinc fingers lie at residues 207 to 228 (VLCV…IEAH) and 234 to 257 (YKCS…RTQH). Positions 400–421 (GSSITDSNEPGPSEIKKELAEV) are disordered.

The protein localises to the nucleus. In Caenorhabditis elegans, this protein is Putative zinc finger protein R05D3.3.